Consider the following 222-residue polypeptide: Small ribosomal subunit protein uS3 (222 aa).

The region spanning 38-106 (IRKFISEKLA…NVHINIVEIK (69 aa)) is the KH type-2 domain.

It belongs to the universal ribosomal protein uS3 family. As to quaternary structure, part of the 30S ribosomal subunit. Forms a tight complex with proteins S10 and S14.

In terms of biological role, binds the lower part of the 30S subunit head. Binds mRNA in the 70S ribosome, positioning it for translation. The polypeptide is Small ribosomal subunit protein uS3 (Lactobacillus gasseri (strain ATCC 33323 / DSM 20243 / BCRC 14619 / CIP 102991 / JCM 1131 / KCTC 3163 / NCIMB 11718 / NCTC 13722 / AM63)).